The following is a 2009-amino-acid chain: ADP-ribosylation factor guanine nucleotide-exchange factor SEC7 (2009 aa).

Positions M1 to T220 are disordered. A compositionally biased stretch (polar residues) spans I17–P33. Basic and acidic residues predominate over residues I37 to G53. A compositionally biased stretch (acidic residues) spans E91 to D118. Low complexity predominate over residues S134–S143. Over residues S144–D154 the composition is skewed to acidic residues. Residues G155–E165 show a composition bias toward low complexity. Acidic residues predominate over residues S166–A184. Polar residues predominate over residues S194 to R209. Positions N210–T220 are enriched in low complexity. A phosphoserine mark is found at S212 and S215. T334 carries the phosphothreonine modification. Phosphoserine occurs at positions 447, 452, and 455. Positions N653–N657 match the HUS box motif. A compositionally biased stretch (low complexity) spans S771–S788. Residues S771 to D814 form a disordered region. K797 is covalently cross-linked (Glycyl lysine isopeptide (Lys-Gly) (interchain with G-Cter in ubiquitin)). S807 is modified (phosphoserine). Residues L824–I1010 enclose the SEC7 domain. D940 provides a ligand contact to Mg(2+). The HDS1 domain stretch occupies residues H1017 to S1220. S1226 is modified (phosphoserine). T1240 carries the phosphothreonine modification. Polar residues predominate over residues G1708–S1723. The tract at residues G1708–E1803 is disordered. The segment covering Q1724–E1751 has biased composition (basic and acidic residues). S1741 and S1752 each carry phosphoserine. The segment covering L1764–P1777 has biased composition (polar residues). The C2 domain-interacting region (CIR) stretch occupies residues F1836 to V1883.

As to quaternary structure, interacts with ARF1. Interacts (via C-terminus) with RSP5 ubiquitin ligase.

The protein resides in the cytoplasm. It localises to the golgi apparatus. Its subcellular location is the trans-Golgi network. It is found in the cytoplasmic vesicle. The protein localises to the COPI-coated vesicle membrane. The protein resides in the COPII-coated vesicle membrane. Its function is as follows. Guanine exchange factor that acts as an activator of ARF1 at the trans-Golgi network and is thus involved in vesicular budding and traffic between compartments of the Golgi apparatus. Activation of Arf (ADP-ribosylation factor) GTPases is essential for vesicle formation via recruitment of cargo adapters and coat proteins necessary for Golgi trafficking. Also plays an essential role in ER-to-Golgi traffic. SEC7 also acts as an effector of two Rab GTPases, YPT1 and YPT31/32. The chain is ADP-ribosylation factor guanine nucleotide-exchange factor SEC7 from Saccharomyces cerevisiae (strain ATCC 204508 / S288c) (Baker's yeast).